Here is a 271-residue protein sequence, read N- to C-terminus: Short chain dehydrogenase virK (271 aa).

NADP(+) is bound by residues leucine 13, aspartate 59, asparagine 87, tyrosine 168, lysine 172, valine 201, and threonine 203. Tyrosine 168 functions as the Proton donor in the catalytic mechanism. Lysine 172 (lowers pKa of active site Tyr) is an active-site residue.

The protein belongs to the short-chain dehydrogenases/reductases (SDR) family.

It functions in the pathway secondary metabolite biosynthesis. In terms of biological role, short chain dehydrogenase; part of the gene cluster that mediates the biosynthesis of virensols and trichoxide, fungal natural products that contain or are derived from a salicylaldehyde core. The pathway begins with the synthesis of the reduced chain in virensol C by the highly reducing polyketide synthase virA via condensation of one acetate and 8 malonate units. VirA has interesting programming rules since the first 2 ketides are fully reduced, the 3 following ketides undergo beta-dehydration, and the last 3 ketides are only reduced to beta-hydroxys to yield the trihydroxy portion. The production of aldehyde virensol C by virA alone is surprising, since virA does not contain a reductase (R) domain that is typically associated with reductive product release in HRPKS. The cupin-domain enzyme virC is involved in enhancing virA product turnover. The short-chain dehydrogenase virB then oxidizes the C-7 alcohol of virensol C to a ketone, yielding virensol D. Virensol D is further transformed to salicylaldehyde 5-deoxyaurocitrin by the short-chain dehydrogenase virD. VirD catalyzes the dehydrogenation of C-3 to form the beta-ketone aldehyde, which is followed by the generation of the nucleophilic C-2 that is required for the intramolecular aldol condensation between C-2 and C-7, itself followed by dehydration and aromatization which leads to salicylaldehyde 5-deoxyaurocitrin. While the dehydrogenation of virensol D is definitely catalyzed by virD, the aldol condensation and dehydration may be uncatalyzed or assisted by virD. The short chain dehydrogenase virG then converts salicylaldehyde 5-deoxyaurocitrin into virensol B which is further hydroxylated by the cytochrome P450 monooxygenase virE to yield the hydroquinone virensol A. VirI then may oxidize virensol A to form the quinone, while virH performs the epoxidation. Finally, the two remaining short-chain dehydrogenases, virK and virL, are probably responsible for reducing the ketones to the corresponding alcohols to furnish the epoxycyclohexanol structure in trichoxide. The sequence is that of Short chain dehydrogenase virK from Hypocrea virens (strain Gv29-8 / FGSC 10586) (Gliocladium virens).